Here is a 110-residue protein sequence, read N- to C-terminus: Insulin (110 aa).

A signal peptide spans 1 to 23 (MALWLQAFTLLVLLVLSSPGAQS). 3 disulfide bridges follow: Cys-30–Cys-96, Cys-42–Cys-109, and Cys-95–Cys-100. Positions 56-87 (DVDPLLGFLSPKSAQENEADEYPYKDQGDLKV) are cleaved as a propeptide — c peptide.

The protein belongs to the insulin family. As to quaternary structure, heterodimer of a B chain and an A chain linked by two disulfide bonds.

It localises to the secreted. In terms of biological role, insulin decreases blood glucose concentration. It increases cell permeability to monosaccharides, amino acids and fatty acids. It accelerates glycolysis, the pentose phosphate cycle, and glycogen synthesis in liver. The chain is Insulin (ins) from Pantodon buchholzi (Freshwater butterflyfish).